Consider the following 242-residue polypeptide: Probable transcriptional regulatory protein Csac_0964 (242 aa).

The interval 1-20 (MSGHSKWANIRHKKEKTDAQ) is disordered.

Belongs to the TACO1 family.

It is found in the cytoplasm. This chain is Probable transcriptional regulatory protein Csac_0964, found in Caldicellulosiruptor saccharolyticus (strain ATCC 43494 / DSM 8903 / Tp8T 6331).